The chain runs to 272 residues: Putative phosphoenolpyruvate synthase regulatory protein (272 aa).

152–159 (GVSRCGKT) is a binding site for ADP.

It belongs to the pyruvate, phosphate/water dikinase regulatory protein family. PSRP subfamily.

The catalysed reaction is [pyruvate, water dikinase] + ADP = [pyruvate, water dikinase]-phosphate + AMP + H(+). It catalyses the reaction [pyruvate, water dikinase]-phosphate + phosphate + H(+) = [pyruvate, water dikinase] + diphosphate. In terms of biological role, bifunctional serine/threonine kinase and phosphorylase involved in the regulation of the phosphoenolpyruvate synthase (PEPS) by catalyzing its phosphorylation/dephosphorylation. This chain is Putative phosphoenolpyruvate synthase regulatory protein, found in Pseudomonas putida (strain W619).